The primary structure comprises 212 residues: uncharacterized protein (212 aa).

This is an uncharacterized protein from Dryophytes versicolor (chameleon treefrog).